Consider the following 387-residue polypeptide: Alkanesulfonate monooxygenase (387 aa).

Belongs to the SsuD family.

The catalysed reaction is an alkanesulfonate + FMNH2 + O2 = an aldehyde + FMN + sulfite + H2O + 2 H(+). Catalyzes the desulfonation of aliphatic sulfonates. This chain is Alkanesulfonate monooxygenase, found in Xanthomonas axonopodis pv. citri (strain 306).